Reading from the N-terminus, the 594-residue chain is Invasin CotH2 (594 aa).

Positions 1 to 19 are cleaved as a signal peptide; sequence MKLSLTIVSSSFLVAIAHA. 7 N-linked (GlcNAc...) asparagine glycosylation sites follow: Asn-77, Asn-162, Asn-226, Asn-316, Asn-441, Asn-519, and Asn-533. Residues 529 to 565 form a disordered region; it reads PPAANGTATSTNDGGNTHTAAGESKPASSSESSGSKI. Over residues 534 to 547 the composition is skewed to polar residues; that stretch reads GTATSTNDGGNTHT. Low complexity predominate over residues 548-565; sequence AAGESKPASSSESSGSKI. Ser-571 carries the GPI-anchor amidated serine lipid modification. The propeptide at 572-594 is removed in mature form; the sequence is GASRSAVSTVLLGVTALVATAIF.

Interacts with host epithelial cell surface HSPA5/BiP protein.

Its subcellular location is the cell membrane. Functionally, promotes invasion of host epithelial cells by adhering to receptors on the host cell surface to facilitate endocytosis of the pathogen into host cells. Binds HSPA5/BiP protein on the cell surface of host epithelial cells. The sequence is that of Invasin CotH2 from Rhizopus delemar (strain RA 99-880 / ATCC MYA-4621 / FGSC 9543 / NRRL 43880) (Mucormycosis agent).